The primary structure comprises 198 residues: Uracil phosphoribosyltransferase homolog (198 aa).

The protein belongs to the UPRTase family.

It localises to the plastid. Its subcellular location is the chloroplast. This Pyropia yezoensis (Susabi-nori) protein is Uracil phosphoribosyltransferase homolog.